We begin with the raw amino-acid sequence, 312 residues long: MSYPESKLTGLTGFALAAKVTGGWAGPVVSITNLDQLKANIGTVTPQVLVINSNISASSLTKVNMGANKTLIGSFQNRTLENIHLRATAQSQNIILQNLIFKHSANIKANDDIQVYLNYGSKYWIDHCSFVGHSWSTTDGSEDKLLYIGEKADYATISNCFFGSHKYGLIFGHPADDNNAAFNGYPRLTLCHNRFDNMEVRAPGLMRYGYFHVYNNYINKFHLGFTLAQNANILSESNYFGEGSQNNGMLDDKGSGTFTDTNSVPPITNQKSPKAQWTATSNYAYTLKTAAQAKDFTQKNAGAQAAALVFGS.

Arginine 201 is a catalytic residue. A disordered region spans residues 254 to 274 (GSGTFTDTNSVPPITNQKSPK). A compositionally biased stretch (polar residues) spans 256-274 (GTFTDTNSVPPITNQKSPK).

Belongs to the polysaccharide lyase 1 family.

It catalyses the reaction Eliminative cleavage of (1-&gt;4)-alpha-D-galacturonan methyl ester to give oligosaccharides with 4-deoxy-6-O-methyl-alpha-D-galact-4-enuronosyl groups at their non-reducing ends.. This Pseudomonas marginalis (Pseudomonas panacis) protein is Pectin lyase (pnl).